We begin with the raw amino-acid sequence, 280 residues long: Energy-coupling factor transporter ATP-binding protein EcfA (280 aa).

The ABC transporter domain maps to 5 to 240 (IDVKNLTYKY…DEMLKLTGLE (236 aa)). 40 to 47 (GHNGSGKS) contributes to the ATP binding site.

It belongs to the ABC transporter superfamily. Energy-coupling factor EcfA family. As to quaternary structure, forms a stable energy-coupling factor (ECF) transporter complex composed of 2 membrane-embedded substrate-binding proteins (S component), 2 ATP-binding proteins (A component) and 2 transmembrane proteins (T component).

It localises to the cell membrane. Functionally, ATP-binding (A) component of a common energy-coupling factor (ECF) ABC-transporter complex. Unlike classic ABC transporters this ECF transporter provides the energy necessary to transport a number of different substrates. In Pediococcus pentosaceus (strain ATCC 25745 / CCUG 21536 / LMG 10740 / 183-1w), this protein is Energy-coupling factor transporter ATP-binding protein EcfA.